A 202-amino-acid polypeptide reads, in one-letter code: Matrix protein (202 aa).

The PPXY motif signature appears at 35–38; that stretch reads PPEY. The tract at residues 115–151 is essential for glycoprotein binding; it reads KLRRTFIFQWADSRGPLEGEELEYSQEITWDDDTEFV.

This sequence belongs to the lyssavirus matrix protein family. In terms of assembly, homomultimer. Interacts with nucleoprotein and with the cytoplasmic domain of glycoprotein. Interacts with host ATP6V1A; this interaction plays an important role in virion uncoating after viral entry.

It localises to the virion membrane. The protein resides in the host endomembrane system. It is found in the host cytoplasm. Plays a major role in assembly, budding and uncoating of virion after membrane fusion. Completely covers the ribonucleoprotein coil and keep it in condensed bullet-shaped form. Inhibits viral transcription and stimulates replication. Plays a major role in early induction of TRAIL-mediated apoptosis in infected neurons. Inhibits the integrated stress response (ISR) in the infected cell by blocking the formation of stress granules. This chain is Matrix protein (M), found in Rabies virus (strain ERA) (RABV).